Here is a 92-residue protein sequence, read N- to C-terminus: Acyl carrier protein (92 aa).

The Carrier domain maps to 1–84 (MPSTADERQL…QIAAHLAEAV (84 aa)). O-(pantetheine 4'-phosphoryl)serine is present on Ser44.

This sequence belongs to the acyl carrier protein (ACP) family. 4'-phosphopantetheine is transferred from CoA to a specific serine of apo-ACP by AcpS. This modification is essential for activity because fatty acids are bound in thioester linkage to the sulfhydryl of the prosthetic group.

It is found in the cytoplasm. The protein operates within lipid metabolism; fatty acid biosynthesis. Its function is as follows. Carrier of the growing fatty acid chain in fatty acid biosynthesis. This Streptomyces coelicolor (strain ATCC BAA-471 / A3(2) / M145) protein is Acyl carrier protein.